We begin with the raw amino-acid sequence, 712 residues long: Polyribonucleotide nucleotidyltransferase (712 aa).

Mg(2+) is bound by residues Asp-487 and Asp-493. In terms of domain architecture, KH spans 554–613; the sequence is PRIEVMNIPVDKIREVIGSGGKVIREIVEKTGAKINIEDDGTVKIASSSGKEIEAARKWI. The S1 motif domain maps to 623–691; the sequence is GQIYEGTVVK…ERGKVRLSMK (69 aa).

The protein belongs to the polyribonucleotide nucleotidyltransferase family. The cofactor is Mg(2+).

It localises to the cytoplasm. It catalyses the reaction RNA(n+1) + phosphate = RNA(n) + a ribonucleoside 5'-diphosphate. Its function is as follows. Involved in mRNA degradation. Catalyzes the phosphorolysis of single-stranded polyribonucleotides processively in the 3'- to 5'-direction. This chain is Polyribonucleotide nucleotidyltransferase, found in Rhizobium leguminosarum bv. trifolii (strain WSM2304).